The chain runs to 109 residues: T cell receptor alpha variable 25 (109 aa).

The signal sequence occupies residues 1–19 (MLLITSMLVLWMQLSQVNG). Residues 20 to 109 (QQVMQIPQYQ…TDVGTYFCAG (90 aa)) enclose the Ig-like domain. Residues C41 and C107 are joined by a disulfide bond. 2 N-linked (GlcNAc...) asparagine glycosylation sites follow: N42 and N89.

Alpha-beta TR is a heterodimer composed of an alpha and beta chain; disulfide-linked. The alpha-beta TR is associated with the transmembrane signaling CD3 coreceptor proteins to form the TR-CD3 (TcR or TCR). The assembly of alpha-beta TR heterodimers with CD3 occurs in the endoplasmic reticulum where a single alpha-beta TR heterodimer associates with one CD3D-CD3E heterodimer, one CD3G-CD3E heterodimer and one CD247 homodimer forming a stable octameric structure. CD3D-CD3E and CD3G-CD3E heterodimers preferentially associate with TR alpha and TR beta chains, respectively. The association of the CD247 homodimer is the last step of TcR assembly in the endoplasmic reticulum and is required for transport to the cell surface.

Its subcellular location is the cell membrane. V region of the variable domain of T cell receptor (TR) alpha chain that participates in the antigen recognition. Alpha-beta T cell receptors are antigen specific receptors which are essential to the immune response and are present on the cell surface of T lymphocytes. Recognize peptide-major histocompatibility (MH) (pMH) complexes that are displayed by antigen presenting cells (APC), a prerequisite for efficient T cell adaptive immunity against pathogens. Binding of alpha-beta TR to pMH complex initiates TR-CD3 clustering on the cell surface and intracellular activation of LCK that phosphorylates the ITAM motifs of CD3G, CD3D, CD3E and CD247 enabling the recruitment of ZAP70. In turn ZAP70 phosphorylates LAT, which recruits numerous signaling molecules to form the LAT signalosome. The LAT signalosome propagates signal branching to three major signaling pathways, the calcium, the mitogen-activated protein kinase (MAPK) kinase and the nuclear factor NF-kappa-B (NF-kB) pathways, leading to the mobilization of transcription factors that are critical for gene expression and essential for T cell growth and differentiation. The T cell repertoire is generated in the thymus, by V-(D)-J rearrangement. This repertoire is then shaped by intrathymic selection events to generate a peripheral T cell pool of self-MH restricted, non-autoaggressive T cells. Post-thymic interaction of alpha-beta TR with the pMH complexes shapes TR structural and functional avidity. The protein is T cell receptor alpha variable 25 of Homo sapiens (Human).